A 221-amino-acid polypeptide reads, in one-letter code: Ribosomal RNA small subunit methyltransferase Nep1 (221 aa).

Residues glycine 174, glycine 179, and 196-201 (VGDEPL) contribute to the S-adenosyl-L-methionine site.

Belongs to the class IV-like SAM-binding methyltransferase superfamily. RNA methyltransferase NEP1 family. Homodimer.

It catalyses the reaction a pseudouridine in rRNA + S-adenosyl-L-methionine = an N(1)-methylpseudouridine in rRNA + S-adenosyl-L-homocysteine + H(+). In terms of biological role, methyltransferase involved in ribosomal biogenesis. Specifically catalyzes the N1-methylation of the pseudouridine corresponding to position 914 in M.jannaschii 16S rRNA. This is Ribosomal RNA small subunit methyltransferase Nep1 from Pyrobaculum neutrophilum (strain DSM 2338 / JCM 9278 / NBRC 100436 / V24Sta) (Thermoproteus neutrophilus).